A 283-amino-acid chain; its full sequence is Bifunctional protein FolD (283 aa).

Residue 166–168 (GAS) participates in NADP(+) binding.

It belongs to the tetrahydrofolate dehydrogenase/cyclohydrolase family. In terms of assembly, homodimer.

The enzyme catalyses (6R)-5,10-methylene-5,6,7,8-tetrahydrofolate + NADP(+) = (6R)-5,10-methenyltetrahydrofolate + NADPH. It catalyses the reaction (6R)-5,10-methenyltetrahydrofolate + H2O = (6R)-10-formyltetrahydrofolate + H(+). It functions in the pathway one-carbon metabolism; tetrahydrofolate interconversion. Functionally, catalyzes the oxidation of 5,10-methylenetetrahydrofolate to 5,10-methenyltetrahydrofolate and then the hydrolysis of 5,10-methenyltetrahydrofolate to 10-formyltetrahydrofolate. The sequence is that of Bifunctional protein FolD from Coxiella burnetii (strain CbuG_Q212) (Coxiella burnetii (strain Q212)).